The following is a 326-amino-acid chain: Undecaprenyl-phosphate 4-deoxy-4-formamido-L-arabinose transferase (326 aa).

2 helical membrane-spanning segments follow: residues methionine 235–isoleucine 255 and valine 270–leucine 290.

This sequence belongs to the glycosyltransferase 2 family.

It localises to the cell inner membrane. It catalyses the reaction UDP-4-deoxy-4-formamido-beta-L-arabinose + di-trans,octa-cis-undecaprenyl phosphate = 4-deoxy-4-formamido-alpha-L-arabinopyranosyl di-trans,octa-cis-undecaprenyl phosphate + UDP. The protein operates within glycolipid biosynthesis; 4-amino-4-deoxy-alpha-L-arabinose undecaprenyl phosphate biosynthesis; 4-amino-4-deoxy-alpha-L-arabinose undecaprenyl phosphate from UDP-4-deoxy-4-formamido-beta-L-arabinose and undecaprenyl phosphate: step 1/2. It functions in the pathway bacterial outer membrane biogenesis; lipopolysaccharide biosynthesis. In terms of biological role, catalyzes the transfer of 4-deoxy-4-formamido-L-arabinose from UDP to undecaprenyl phosphate. The modified arabinose is attached to lipid A and is required for resistance to polymyxin and cationic antimicrobial peptides. The chain is Undecaprenyl-phosphate 4-deoxy-4-formamido-L-arabinose transferase from Sodalis glossinidius (strain morsitans).